A 359-amino-acid chain; its full sequence is Glycerol-1-phosphate dehydrogenase [NAD(P)+] (359 aa).

Residues 107–111 (GRVID) and 129–132 (TAAS) contribute to the NAD(+) site. D134 lines the substrate pocket. Residue S138 coordinates NAD(+). Position 181 (D181) interacts with substrate. Positions 181 and 261 each coordinate Zn(2+). H265 provides a ligand contact to substrate. Residue H277 participates in Zn(2+) binding.

The protein belongs to the glycerol-1-phosphate dehydrogenase family. Requires Zn(2+) as cofactor.

It localises to the cytoplasm. It carries out the reaction sn-glycerol 1-phosphate + NAD(+) = dihydroxyacetone phosphate + NADH + H(+). The enzyme catalyses sn-glycerol 1-phosphate + NADP(+) = dihydroxyacetone phosphate + NADPH + H(+). The protein operates within membrane lipid metabolism; glycerophospholipid metabolism. In terms of biological role, catalyzes the NAD(P)H-dependent reduction of dihydroxyacetonephosphate (DHAP or glycerone phosphate) to glycerol 1-phosphate (G1P). The G1P thus generated is used as the glycerophosphate backbone of phospholipids in the cellular membranes of Archaea. In Methanoregula boonei (strain DSM 21154 / JCM 14090 / 6A8), this protein is Glycerol-1-phosphate dehydrogenase [NAD(P)+].